The following is a 161-amino-acid chain: Arachidonate 5-lipoxygenase-activating protein (161 aa).

The Lumenal segment spans residues 1-8; the sequence is MDQEAVGN. Residues 9–30 traverse the membrane as a helical segment; that stretch reads VVLLAIVTLISVVQNAFFAHKV. The Cytoplasmic segment spans residues 31–52; sequence ELESKAQSGRSFQRTGTLAFER. A helical transmembrane segment spans residues 53–77; sequence VYTANQNCVDAYPTFLVVLWTAGLL. The Lumenal portion of the chain corresponds to 78–80; sequence CSQ. The chain crosses the membrane as a helical span at residues 81 to 102; it reads VPAAFAGLMYLFVRQKYFVGYL. Residues 103–107 lie on the Cytoplasmic side of the membrane; that stretch reads GERTQ. Residues 108–115 lie within the membrane without spanning it; sequence STPGYIFG. Residues 116–128 form a helical membrane-spanning segment; that stretch reads KRIILFLFLMSLA. Residues 129–161 are Lumenal-facing; the sequence is GILNHYLIFFFGSDFENYIRTITTTISPLLLIP.

This sequence belongs to the MAPEG family. As to quaternary structure, homotrimer. Interacts with LTC4S and ALOX5.

The protein localises to the nucleus membrane. Its subcellular location is the endoplasmic reticulum membrane. Its function is as follows. Required for leukotriene biosynthesis by ALOX5 (5-lipoxygenase). Anchors ALOX5 to the membrane. Binds arachidonic acid, and could play an essential role in the transfer of arachidonic acid to ALOX5. Binds to MK-886, a compound that blocks the biosynthesis of leukotrienes. This Rattus norvegicus (Rat) protein is Arachidonate 5-lipoxygenase-activating protein (Alox5ap).